The primary structure comprises 531 residues: Transcription termination/antitermination protein NusA (531 aa).

In terms of domain architecture, S1 motif spans 165–235; the sequence is GEVIEAKVED…SLWPITLSRS (71 aa). A KH domain is found at 340 to 410; sequence DTSIEVVVPA…FGIKKRREKI (71 aa). A compositionally biased stretch (basic and acidic residues) spans 463-475; sequence EKQVTPKEKEKVQ. Residues 463-531 form a disordered region; that stretch reads EKQVTPKEKE…KQTFDSFDDL (69 aa). A compositionally biased stretch (basic residues) spans 476–490; it reads PKAKVHSNSHSKKPA. Residues 502–512 show a composition bias toward basic and acidic residues; it reads ASDKNLKKDQV. Residues 513–531 are compositionally biased toward polar residues; the sequence is DNNQTNPQTKQTFDSFDDL.

Belongs to the NusA family. Monomer. Binds directly to the core enzyme of the DNA-dependent RNA polymerase and to nascent RNA.

The protein resides in the cytoplasm. Functionally, participates in both transcription termination and antitermination. This is Transcription termination/antitermination protein NusA from Mycoplasma genitalium (strain ATCC 33530 / DSM 19775 / NCTC 10195 / G37) (Mycoplasmoides genitalium).